Reading from the N-terminus, the 224-residue chain is EF-hand calcium-binding domain-containing protein 1 (224 aa).

The N-terminal stretch at 1-21 is a signal peptide; that stretch reads MKVSLLLLALVLVCLVQGSES. The EF-hand domain maps to 115–150; sequence IAHPDFMKAYSIADVDGDGELSPKEFYNGPYVFEMD. Ca(2+)-binding residues include aspartate 128, aspartate 130, aspartate 132, glutamate 134, and glutamate 139.

Component of the acid-soluble organic matrix of calcified layers of the shell (at protein level).

It is found in the secreted. In Lottia gigantea (Giant owl limpet), this protein is EF-hand calcium-binding domain-containing protein 1.